Consider the following 580-residue polypeptide: Isochorismate synthase, chloroplastic (580 aa).

Residues M1–V91 constitute a chloroplast transit peptide.

It belongs to the isochorismate synthase family. It depends on Mg(2+) as a cofactor.

The protein resides in the plastid. The protein localises to the chloroplast. It catalyses the reaction chorismate = isochorismate. Not inhibited by Tyr, Phe or Trp. Its function is as follows. Involved in the synthesis of o-succinylbenzoic acid, 2,3-dihydroxybenzoic acid and salicylic acid (SA). In Catharanthus roseus (Madagascar periwinkle), this protein is Isochorismate synthase, chloroplastic.